The chain runs to 921 residues: DNA mismatch repair protein MutS 1 (921 aa).

Residue 619–626 (GPNMSGKS) coordinates ATP. A disordered region spans residues 837-887 (FRDGAAQSGGAAAGSTAEPVATDGDPEHAPGEAAAEGPKGDERAASLDSET). Residues 840-853 (GAAQSGGAAAGSTA) show a composition bias toward low complexity.

The protein belongs to the DNA mismatch repair MutS family.

Functionally, this protein is involved in the repair of mismatches in DNA. It is possible that it carries out the mismatch recognition step. This protein has a weak ATPase activity. This chain is DNA mismatch repair protein MutS 1, found in Haloarcula marismortui (strain ATCC 43049 / DSM 3752 / JCM 8966 / VKM B-1809) (Halobacterium marismortui).